Consider the following 395-residue polypeptide: L-lactate dehydrogenase (395 aa).

The FMN hydroxy acid dehydrogenase domain occupies 1–380; that stretch reads MIISAASDYR…SKDSLVQELS (380 aa). Tyr-24 lines the substrate pocket. FMN-binding residues include Ser-106 and Gln-127. Tyr-129 contributes to the substrate binding site. Thr-155 contributes to the FMN binding site. Arg-164 contributes to the substrate binding site. Position 251 (Lys-251) interacts with FMN. The active-site Proton acceptor is the His-275. Arg-278 contributes to the substrate binding site. 306–330 is an FMN binding site; sequence DSGIRNGLDVVRMIALGADSVLLGR.

Belongs to the FMN-dependent alpha-hydroxy acid dehydrogenase family. Requires FMN as cofactor.

Its subcellular location is the cell inner membrane. It catalyses the reaction (S)-lactate + A = pyruvate + AH2. Its function is as follows. Catalyzes the conversion of L-lactate to pyruvate. Is coupled to the respiratory chain. The polypeptide is L-lactate dehydrogenase (Enterobacter sp. (strain 638)).